Consider the following 455-residue polypeptide: MHPQLHKCRQLMDAYIRQKRASPGMVQASDLQMSRPMSGMRGNSRELHAYDGPMQFIGSPHNPDQILSNNSSSVHLSSSMNSSRNNSNNLRSLSTINQEDLIEEISSHELEDEESSPVTVVENPLPPLSANSAHSQRLRNGQQSFNETLDEDDYANRNIAGVAPVRPAGIASPYKDGVAPEASNGVANGSNSGVGSAESEGDVIGSIDLFVMQPAPQGVLYKCRITRDRKGMDRGLFPIYYLHLERDYGKKIFLLGGRKRKKSKTSNYIVSCDPTDLSRNADGFCGKLRSNVFGTSFTVFDSGNKDSTESPRLDLAVIIYDTNILGFKGPRNMTVILPGMTEDDQRVKISSADPKQQGILDLWKMKNMDNIVELHNKTPVWNDETQSYVLNFHGRVTQASVKNFQLVHDSDPEYIVMQFGRTSEDVFTMDYRYPLCAMQAFAIALSSFDGKIACE.

Residues 35–92 (RPMSGMRGNSRELHAYDGPMQFIGSPHNPDQILSNNSSSVHLSSSMNSSRNNSNNLRS) are disordered. A compositionally biased stretch (low complexity) spans 67 to 92 (LSNNSSSVHLSSSMNSSRNNSNNLRS). Ser144 carries the phosphoserine modification.

It belongs to the TUB family.

The protein resides in the cytoplasm. Its subcellular location is the nucleus. It localises to the cell projection. It is found in the cilium membrane. The protein localises to the rhabdomere. The sequence is that of Protein king tubby from Drosophila virilis (Fruit fly).